Here is a 434-residue protein sequence, read N- to C-terminus: Sodium/bile acid cotransporter 5 (434 aa).

The first 18 residues, 1–18 (MSGKLFIILLLLVTPGEA), serve as a signal peptide directing secretion. Residues 19–129 (RKSFLRFLNI…VSVFRQTEDS (111 aa)) lie on the Extracellular side of the membrane. 2 N-linked (GlcNAc...) asparagine glycosylation sites follow: N73 and N96. The chain crosses the membrane as a helical span at residues 130–150 (LFQEPIHVNSSVFLLVLLMIL). Residues 151–172 (LNKCAFGCKIELQVLQTVWKRP) lie on the Cytoplasmic side of the membrane. The helical transmembrane segment at 173 to 193 (LPILLGAVTQFFLMPFCGFLL) threads the bilayer. At 194-195 (SQ) the chain is on the extracellular side. Residues 196–216 (ILGLSKAQAFGFVMTCTCPGG) form a helical membrane-spanning segment. The Cytoplasmic portion of the chain corresponds to 217 to 232 (GGGYLFALLLEGDVTL). The chain crosses the membrane as a helical span at residues 233 to 255 (AILMACTSTSLALIMMPVNSYLY). The Extracellular segment spans residues 256–268 (SCLLGLAGVFHVP). A helical transmembrane segment spans residues 269–289 (VLKIVSTLLFILTPVSIGIVI). The Cytoplasmic segment spans residues 290 to 306 (KHRMPKKAVCLERVVQP). A helical transmembrane segment spans residues 307 to 327 (LSLTLMLVGVYLAFRMGLVFL). Residues 328–331 (RMAN) are Extracellular-facing. A helical membrane pass occupies residues 332 to 352 (LEVFLLGLLVPVLGFSFGYSF). Residues 353 to 365 (AKVYLLPLPVCKT) are Cytoplasmic-facing. A helical transmembrane segment spans residues 366–386 (VAIESGMLNSFLALAIIQLSF). Over 387 to 395 (PQSKAYEAS) the chain is Extracellular. Residues 396–416 (VAPFTVAMCSSCEMLLLLLVY) traverse the membrane as a helical segment. Topologically, residues 417 to 434 (KAKKRPLLSTENEKAPLV) are cytoplasmic.

This sequence belongs to the bile acid:sodium symporter (BASS) (TC 2.A.28) family.

It localises to the membrane. This chain is Sodium/bile acid cotransporter 5 (Slc10a5), found in Rattus norvegicus (Rat).